A 396-amino-acid chain; its full sequence is Aldo-keto reductase ausK (396 aa).

Asp-76 provides a ligand contact to NADP(+). Tyr-81 functions as the Proton donor in the catalytic mechanism. His-156 is a binding site for substrate. NADP(+)-binding positions include 186–187, Gln-212, 241–251, and 317–325; these read CN, DALGSGKFQSR, and RKIQHLHDN.

Belongs to the aldo/keto reductase family. Aldo/keto reductase 2 subfamily. Homodimer.

It functions in the pathway secondary metabolite biosynthesis; terpenoid biosynthesis. Functionally, aldo-keto reductase; part of the gene cluster that mediates the biosynthesis of calidodehydroaustin, a fungal meroterpenoid. The first step of the pathway is the synthesis of 3,5-dimethylorsellinic acid by the polyketide synthase ausA. 3,5-dimethylorsellinic acid is then prenylated by the polyprenyl transferase ausN. Further epoxidation by the FAD-dependent monooxygenase ausM and cyclization by the probable terpene cyclase ausL lead to the formation of protoaustinoid A. Protoaustinoid A is then oxidized to spiro-lactone preaustinoid A3 by the combined action of the FAD-binding monooxygenases ausB and ausC, and the dioxygenase ausE. Acid-catalyzed keto-rearrangement and ring contraction of the tetraketide portion of preaustinoid A3 by ausJ lead to the formation of preaustinoid A4. The aldo-keto reductase ausK, with the help of ausH, is involved in the next step by transforming preaustinoid A4 into isoaustinone which is in turn hydroxylated by the P450 monooxygenase ausI to form austinolide. The cytochrome P450 monooxygenase ausG modifies austinolide to austinol. Austinol is further acetylated to austin by the O-acetyltransferase ausP, which spontaneously changes to dehydroaustin. The cytochrome P450 monooxygenase ausR then converts dehydroaustin is into 7-dehydrodehydroaustin. The hydroxylation catalyzed by ausR permits the O-acetyltransferase ausQ to add an additional acetyl group to the molecule, leading to the formation of acetoxydehydroaustin. The short chain dehydrogenase ausT catalyzes the reduction of the double bond present between carbon atoms 1 and 2 to convert 7-dehydrodehydroaustin into 1,2-dihydro-7-hydroxydehydroaustin. AusQ catalyzes not only an acetylation reaction but also the addition of the PKS ausV diketide product to 1,2-dihydro-7-hydroxydehydroaustin, forming precalidodehydroaustin. Finally, the iron/alpha-ketoglutarate-dependent dioxygenase converts precalidodehydroaustin into calidodehydroaustin. This is Aldo-keto reductase ausK from Aspergillus calidoustus.